The following is an 831-amino-acid chain: Probable basic-leucine zipper transcription factor P (831 aa).

Disordered stretches follow at residues 1–33 (MNHR…PSII) and 54–166 (NITS…IASR). Residues 54–85 (NITSSPSTSSSPPISTTTTTTTTTTTTATAKK) are compositionally biased toward low complexity. Over residues 87 to 96 (NSKEKKKTTN) the composition is skewed to basic and acidic residues. The segment covering 97 to 129 (KDNNNNNNNNNSNNQQQQQQQQQQQQQQQQQQQ) has biased composition (low complexity). The stretch at 101 to 141 (NNNNNNNSNNQQQQQQQQQQQQQQQQQQQYEEEDDDEEDEG) forms a coiled coil. Residues 130-143 (YEEEDDDEEDEGGD) are compositionally biased toward acidic residues. Positions 144–154 (DNTKVGKGEKM) are enriched in basic and acidic residues. The bZIP domain maps to 151-214 (GEKMKARRTN…LELLKFSQEV (64 aa)). The tract at residues 153 to 173 (KMKARRTNQNIASRNYRQRKK) is basic motif. The interval 176-183 (IKEMEDKI) is leucine-zipper. Low complexity-rich tracts occupy residues 469–484 (SSSS…SSTS) and 497–510 (SSSN…SASS). Disordered regions lie at residues 469-510 (SSSS…SASS), 658-697 (QQQA…HQNY), 715-771 (DATN…NTNK), and 787-810 (SLFS…QNDS). Positions 601–664 (AQQHAQQQAQ…QAAQQQAAQQ (64 aa)) form a coiled coil. 3 stretches are compositionally biased toward low complexity: residues 674–695 (PPQH…QQHQ), 720–750 (NNNN…NNNN), and 787–800 (SLFS…NSQS).

The protein belongs to the bZIP family.

Its subcellular location is the nucleus. Its function is as follows. Probable transcriptional regulator. The sequence is that of Probable basic-leucine zipper transcription factor P (bzpP) from Dictyostelium discoideum (Social amoeba).